The sequence spans 897 residues: DNA mismatch repair protein MutS (897 aa).

654-661 contacts ATP; sequence GPNMAGKS.

This sequence belongs to the DNA mismatch repair MutS family.

Its function is as follows. This protein is involved in the repair of mismatches in DNA. It is possible that it carries out the mismatch recognition step. This protein has a weak ATPase activity. The protein is DNA mismatch repair protein MutS of Maricaulis maris (strain MCS10) (Caulobacter maris).